We begin with the raw amino-acid sequence, 363 residues long: DNA repair protein rlp1 (363 aa).

Belongs to the RecA family. RAD51 subfamily. As to quaternary structure, interacts with rdl1 and sws1.

Its subcellular location is the cytoplasm. The protein localises to the nucleus. Its function is as follows. Required for normal levels of meiotic recombination. Acts in the recombinational pathway of double-strand break (DSB) repair together with rhp51, rhp55 and rad22. Required for the full extent of DNA recombination and cell survival under condition of a replication fork collapse. This chain is DNA repair protein rlp1, found in Schizosaccharomyces pombe (strain 972 / ATCC 24843) (Fission yeast).